A 344-amino-acid polypeptide reads, in one-letter code: Protein-arginine kinase (344 aa).

One can recognise a Phosphagen kinase C-terminal domain in the interval 14–244 (IVLSSRIRLA…KQIIQQERLA (231 aa)). ATP is bound by residues 17–21 (SSRIR), His-81, Arg-115, 166–170 (RASAM), and 197–202 (RGLYGE).

It belongs to the ATP:guanido phosphotransferase family.

The enzyme catalyses L-arginyl-[protein] + ATP = N(omega)-phospho-L-arginyl-[protein] + ADP + H(+). Catalyzes the specific phosphorylation of arginine residues in proteins. The chain is Protein-arginine kinase from Clostridium novyi (strain NT).